The sequence spans 780 residues: Ribonucleoside-diphosphate reductase large subunit (780 aa).

Substrate is bound by residues T177, 192 to 193 (SC), G223, 393 to 397 (NLCAE), and 595 to 599 (PTVGS). C193 and C409 are disulfide-bonded. N393 functions as the Proton acceptor in the catalytic mechanism. C395 serves as the catalytic Cysteine radical intermediate. E397 serves as the catalytic Proton acceptor.

Belongs to the ribonucleoside diphosphate reductase large chain family. Heterotetramer composed of a homodimer of the large subunit (R1) and a homodimer of the small subunit (R2). Larger multisubunit protein complex are also active, composed of (R1)n(R2)n.

It carries out the reaction a 2'-deoxyribonucleoside 5'-diphosphate + [thioredoxin]-disulfide + H2O = a ribonucleoside 5'-diphosphate + [thioredoxin]-dithiol. Ribonucleoside-diphosphate reductase holoenzyme provides the precursors necessary for viral DNA synthesis. Allows virus growth in non-dividing cells, as well as reactivation from latency in infected hosts. Catalyzes the biosynthesis of deoxyribonucleotides from the corresponding ribonucleotides. The sequence is that of Ribonucleoside-diphosphate reductase large subunit from Connochaetes taurinus (Blue wildebeest).